A 352-amino-acid polypeptide reads, in one-letter code: Pre-rRNA-processing protein ipi1 (352 aa).

The protein belongs to the IPI1/TEX10 family. As to quaternary structure, component of the RIX1 complex, composed of rrm-9/ipi1, rix1/ipi2 and ipi3 in a 1:2:2 stoichiometry. The complex interacts (via rix1) with mdn1 (via its hexameric AAA ATPase ring) and the pre-60S ribosome particles.

It is found in the nucleus. Its function is as follows. Component of the RIX1 complex required for processing of ITS2 sequences from 35S pre-rRNA. The sequence is that of Pre-rRNA-processing protein ipi1 (rrm-9) from Neurospora crassa (strain ATCC 24698 / 74-OR23-1A / CBS 708.71 / DSM 1257 / FGSC 987).